A 170-amino-acid polypeptide reads, in one-letter code: Arginine repressor (170 aa).

It belongs to the ArgR family.

It is found in the cytoplasm. It participates in amino-acid biosynthesis; L-arginine biosynthesis [regulation]. In terms of biological role, regulates arginine biosynthesis genes. The sequence is that of Arginine repressor from Mycobacterium tuberculosis (strain ATCC 25177 / H37Ra).